Consider the following 321-residue polypeptide: Nitrilase blr3397 (321 aa).

Residues 10 to 277 (YKAAVVQAAS…ETILYADIAL (268 aa)) form the CN hydrolase domain. The Proton acceptor role is filled by E50. K137 serves as the catalytic Proton donor. The active-site Nucleophile is the C171.

This sequence belongs to the carbon-nitrogen hydrolase superfamily. Nitrilase family. Homodecamer.

The enzyme catalyses an aliphatic nitrile + 2 H2O = a carboxylate + NH4(+). Functionally, nitrilase that acts on various kinds of nitrile compounds such as aliphatic and aromatic nitriles. Has higher activity toward aliphatic nitriles compared to aromatic nitriles. Among the different substrates tested, has the highest activity toward hydrocinnamonitrile. The chain is Nitrilase blr3397 from Bradyrhizobium diazoefficiens (strain JCM 10833 / BCRC 13528 / IAM 13628 / NBRC 14792 / USDA 110).